We begin with the raw amino-acid sequence, 1711 residues long: MAQNAPDCEDTQDFQFKLHHKIVAFKKCGEPRSNVNLLAVSSSRGLLFAGSPTQPELKVIIVKDLVNAKSTAQQPQARLVPLPSIPNYIACSSDGNLLAVNHTQNGTSLLSIYAVLSFMTPDVRPVYNIRLAAEDHVHGVQLLWNPVLPNSLAVVLSNGALAMYALKEGGNFEMHSLDKNQQVKCGCWSPKGKQIVLGFPGGTVKQFKPDLTLAKTLLCPPNIHDAPFDTIAIQWLSTFQFAVIFLQHGEDCSPSLYILNAPKAGAPSYINYYDICYSMNGPRNHQFVFSHVPQWNLLLVVSANGVEVGIMRSTEAGDTPAWQQLTLLDEARIEMPLSEDKDETFPLGFAFDTSTTHQLTINEKKLQTMPMVHVLSSDGELLSFNFLNVLPTAVSVCSPPPPVADTSGQFKPLNMLLASEEEEQPAWAASPSKAPAATPAASSDISFAFTPNTVTSTPAPSKDKQPSLFSGFGAAAAKAPAPQLSFGTAPTSSPVSFGAPTTNAAKPTTPFGGFGTQATTTAMGSMFSASGANAFGGMALNKPAIASVTPRTAAPGSTVPATPASAPANKPLYTVPLTFTPVDTKPATSAPPQIADESLKPDDTEPIIKDMIALQIEAFSKDIQKQKEQTKELLKGIAAPSALRAYAKRLDDLQELNEQAKDVEFELDVQGLRQGLNEAYAIVAECRGKLEIYRKPEITRLMNSSSCDPSGRRMLARLQSYVAANEAQLRLAQQHVDLQWEQFQDVVRRNSKSRMHMPCLEGIYQRLTRLQNLTSNQRIVQNNIKSKLKERGLLQAALLDQEKSRTRTNEAVDTLTDSILTMSLSQVVDSNAAKLTRERLQKIRNIVQLQKINVICPQRPDRVGLKSEVILETKRRAEQIKRAAAKPATANKYTQAAVAPPSPPDVAPTPAVAPMPQATVTVAPPLPKPMPSIPSVVEKPGVPTHPTTPVATPFSFSQSIPFVKTSTVTPTTNTVTPGEAAKPGLSIFGGSTISSFSFGGGAAKSALSFGTGSPAVAAPTPKPNPLSAVEKPTPEPTKPKEQKAAESKEFKAVQPETEESKVPQKPKAETENKSFGFGGFTGTGGTVGNTSSSPFSFGGLGSSLGFGGTAAAVPKSEPSSTATTSVATSASTAPFGIFSAALAKPSNSEPITTVTSNTTTITSKPTNVIASSSVTDAPSVTTTNAVTSSTDPIGGLFSSVTICKPNTPADTTKPANIFGGGLSAGSFSFGGTIDASKGLFGSTKPVATAPTSVTEANNKTDPISTTPSAISTTTATTTVSSPAVVPAAVTAAVPATSSTTVTSSTAVPGSAFSFSNAFSTLSAGGAAAPTTSASAPLAAKSPTATSTGNNSSNSVFGGGFAVATSTAAPVASPFQSAAKSPVSSANIFGSIPKAETSVFGGATTAPSNTTAAATPDAPPAGLFASAAISNPSPFGSPTTRAPASGGNIFGQAVKPSVFGQPAQAGDSGGSIFGGGSASTPFGSSSIFGGGNTQGAVGAPAAGSTSIFGQKVFGQSSAAAPAAGGNIFSNPVGSPQASPFGGGGNSIFGSPATAPPASGGSIFGGGSSSGGFGSFTQTTPAQGGFGGGFGQGGGGSVAQTGFGSPQAPQQQTTTPGGFGAKPVFGGSPAFGASPTFGGGATFGSPKGFGGFGGASPVASPPPFGAAAKPAQGNIFETLGGQESGLSFGNLAQTGNSNAQKPAFGGSSFMNYR.

8 repeat units span residues 472 to 473 (FG), 486 to 487 (FG), 497 to 498 (FG), 511 to 512 (FG), 514 to 515 (FG), 535 to 536 (FG), 588 to 589 (TS), and 598 to 599 (SL). Residues 472–1703 (FGAAAAKAPA…NSNAQKPAFG (1232 aa)) form a 45 X 2 AA repeats of F-G region. Leucine-zipper regions lie at residues 650–672 (LDDL…VQGL) and 767–788 (LTRL…KSKL). Residues 886–905 (KPATANKYTQAAVAPPSPPD) form a disordered region. Repeat 9 spans residues 1009-1010 (FG). A disordered region spans residues 1012 to 1081 (GSPAVAAPTP…NKSFGFGGFT (70 aa)). Composition is skewed to basic and acidic residues over residues 1037 to 1051 (TKPK…KEFK) and 1058 to 1072 (EESK…ETEN). The interaction with emb stretch occupies residues 1044–1711 (AAESKEFKAV…FGGSSFMNYR (668 aa)). Repeat copies occupy residues 1075-1076 (FG), 1077-1078 (FG), 1097-1098 (FG), 1106-1107 (FG), 1135-1136 (FG), 1218-1219 (FG), 1229-1230 (FG), and 1240-1241 (FG). Positions 1251-1261 (TSVTEANNKTD) are enriched in polar residues. Residues 1251-1270 (TSVTEANNKTDPISTTPSAI) are disordered. 27 tandem repeats follow at residues 1356–1357 (FG), 1388–1389 (FG), 1399–1400 (FG), 1434–1435 (FG), 1449–1450 (FG), 1458–1459 (FG), 1472–1473 (FG), 1481–1482 (FG), 1487–1488 (FG), 1507–1508 (FG), 1512–1513 (FG), 1539–1540 (FG), 1547–1548 (FG), 1562–1563 (FG), 1571–1572 (FG), 1584–1585 (FG), 1588–1589 (FG), 1601–1602 (FG), 1617–1618 (FG), 1623–1624 (FG), 1629–1630 (FG), 1635–1636 (FG), 1641–1642 (FG), 1647–1648 (FG), 1650–1651 (FG), 1662–1663 (FG), and 1686–1687 (FG). 2 disordered regions span residues 1533–1552 (SPQA…SPAT) and 1557–1614 (SGGS…TTTP). Composition is skewed to gly residues over residues 1560–1572 (SIFG…GGFG) and 1582–1595 (GGFG…GGGS). Low complexity predominate over residues 1596–1614 (VAQTGFGSPQAPQQQTTTP). The span at 1688–1698 (NLAQTGNSNAQ) shows a compositional bias: polar residues. The interval 1688 to 1711 (NLAQTGNSNAQKPAFGGSSFMNYR) is disordered. Residues 1702 to 1703 (FG) form repeat 45.

Component of the nuclear pore complex. Interacts with mbo/Nup88 and (via C-terminus) with emb to attenuate emb-mediated protein export.

The protein resides in the nucleus. It localises to the nuclear pore complex. Its subcellular location is the nucleus membrane. Part of the nuclear pore complex. Serves as a docking site in the receptor-mediated import of substrates across the nuclear pore complex including emb, RanGAP and phosphorylated Mad. Protects mbo/Nup88 from proteasomal degradation at the nuclear pore. Together with mbo/Nup88, sequesters emb in the cytoplasm and thereby attenuates nuclear export signal (NES)-mediated nuclear export. Together with mbo/Nup88, required for the nuclear import of the Rel family transcription factors dorsal (dl) and Dorsal-related immunity factor (Dif) and the activation of an immune response. The sequence is that of Nuclear pore complex protein Nup214 from Drosophila melanogaster (Fruit fly).